A 175-amino-acid polypeptide reads, in one-letter code: DELTA-stichotoxin-Hcr4a (175 aa).

The segment at Ala-1–Ala-10 is plays an important role in the hemolytic activity. The segment at Gly-9 to Ser-28 is N-terminal region. Phosphocholine-binding residues include Ser-52, Val-85, Ser-103, Pro-105, Tyr-131, Tyr-135, and Tyr-136. The trp-rich region, which is important for the binding to lipid membrane stretch occupies residues Ser-103 to Lys-118.

It belongs to the actinoporin family. Sea anemone subfamily. Octamer or nonamer in membranes. Monomer in the soluble state.

Its subcellular location is the secreted. The protein localises to the nematocyst. The protein resides in the target cell membrane. Its function is as follows. Pore-forming protein that forms cations-selective hydrophilic pores of around 1 nm and causes cardiac stimulation and cytolysis. Pore formation is a multi-step process that involves specific recognition of membrane sphingomyelin (but neither cholesterol nor phosphatidylcholine) using aromatic rich region and adjacent phosphocholine (POC) binding site, firm binding to the membrane (mainly driven by hydrophobic interactions) accompanied by the transfer of the N-terminal region to the lipid-water interface and finally pore formation after oligomerization of monomers. This chain is DELTA-stichotoxin-Hcr4a, found in Radianthus crispa (Leathery sea anemone).